A 190-amino-acid polypeptide reads, in one-letter code: dCTP deaminase, dUMP-forming (190 aa).

DCTP is bound by residues 101–106 (KSSLGR), Asp-119, 127–129 (TLE), Gln-148, Tyr-162, and Gln-174. The active-site Proton donor/acceptor is the Glu-129. The disordered stretch occupies residues 161–190 (PYGSSGVGSKYQGQRGPTPSRSYQNFIRST). Residues 171 to 190 (YQGQRGPTPSRSYQNFIRST) are compositionally biased toward polar residues.

Belongs to the dCTP deaminase family. In terms of assembly, homotrimer.

It carries out the reaction dCTP + 2 H2O = dUMP + NH4(+) + diphosphate. It functions in the pathway pyrimidine metabolism; dUMP biosynthesis; dUMP from dCTP: step 1/1. In terms of biological role, bifunctional enzyme that catalyzes both the deamination of dCTP to dUTP and the hydrolysis of dUTP to dUMP without releasing the toxic dUTP intermediate. This Mycobacterium ulcerans (strain Agy99) protein is dCTP deaminase, dUMP-forming.